A 407-amino-acid chain; its full sequence is Protein S-acyltransferase 8 (407 aa).

2 consecutive transmembrane segments (helical) span residues 29-49 (SLPLTLLLIIVPVVLFCVFVA) and 62-82 (GYAIMVVAILFTIYVLILLFF). Residues 136-186 (KYCDTCMLYRPPRCSHCSICNNCVERFDHHCPWVGQCIGLRNYRYFFMFVS) enclose the DHHC domain. Cysteine 166 functions as the S-palmitoyl cysteine intermediate in the catalytic mechanism. 2 helical membrane passes run 181–201 (FFMFVSSSTLLCIYIFSMSAV) and 224–244 (AVVLMIYCFIALWFVGGLTAF). Positions 348-368 (AEDANNNQPHHTLDIDHERAG) are disordered. Basic and acidic residues predominate over residues 358–368 (HTLDIDHERAG). At serine 385 the chain carries Phosphoserine.

This sequence belongs to the DHHC palmitoyltransferase family. As to expression, expressed in flowers and pollen.

Its subcellular location is the cell membrane. The enzyme catalyses L-cysteinyl-[protein] + hexadecanoyl-CoA = S-hexadecanoyl-L-cysteinyl-[protein] + CoA. Its function is as follows. S-acyltransferase involved in protein lipid modification. This Arabidopsis thaliana (Mouse-ear cress) protein is Protein S-acyltransferase 8 (PAT08).